The sequence spans 104 residues: N(4)-acetylcytidine amidohydrolase (104 aa).

Residues 6 to 101 (TFFERFEHDI…EQLYMIRFKV (96 aa)) enclose the ASCH domain. The active-site Proton acceptor is Lys20. Thr23 serves as the catalytic Nucleophile. Glu73 acts as the Proton donor in catalysis.

Belongs to the N(4)-acetylcytidine amidohydrolase family.

The enzyme catalyses N(4)-acetylcytidine + H2O = cytidine + acetate + H(+). It carries out the reaction N(4)-acetyl-2'-deoxycytidine + H2O = 2'-deoxycytidine + acetate + H(+). It catalyses the reaction N(4)-acetylcytosine + H2O = cytosine + acetate + H(+). In terms of biological role, catalyzes the hydrolysis of N(4)-acetylcytidine (ac4C). This Shewanella oneidensis (strain ATCC 700550 / JCM 31522 / CIP 106686 / LMG 19005 / NCIMB 14063 / MR-1) protein is N(4)-acetylcytidine amidohydrolase.